The following is a 513-amino-acid chain: Catalase (513 aa).

A signal peptide spans 1–30; the sequence is MNPSLNAFRPGRLLVAASLTASLLSLSVQA. Catalysis depends on residues His-81 and Asn-153. Heme is bound at residue Tyr-361. Residues 391–407 show a composition bias toward polar residues; it reads DGALNAGHSTSGVNYQP. The disordered stretch occupies residues 391-413; sequence DGALNAGHSTSGVNYQPSRLDPR.

The protein belongs to the catalase family. Requires heme as cofactor.

Its subcellular location is the periplasm. The catalysed reaction is 2 H2O2 = O2 + 2 H2O. Decomposes hydrogen peroxide into water and oxygen; serves to protect cells from the toxic effects of hydrogen peroxide. This Pseudomonas aeruginosa (strain ATCC 15692 / DSM 22644 / CIP 104116 / JCM 14847 / LMG 12228 / 1C / PRS 101 / PAO1) protein is Catalase (katB).